A 344-amino-acid polypeptide reads, in one-letter code: Outer membrane protein assembly factor BamC (344 aa).

The N-terminal stretch at 1–24 (MAYSVQKSRLAKVAGVSLVLLLAA) is a signal peptide. Residue cysteine 25 is the site of N-palmitoyl cysteine attachment. A lipid anchor (S-diacylglycerol cysteine) is attached at cysteine 25.

The protein belongs to the BamC family. In terms of assembly, part of the Bam complex, which is composed of the outer membrane protein BamA, and four lipoproteins BamB, BamC, BamD and BamE. Forms a subcomplex with BamD and BamE. The Bam complex has the shape of a hat, with the BamA beta-barrel crown in the outer membrane and the periplasmic brim formed by the BamA POTRA domains and the 4 lipoproteins.

The protein resides in the cell outer membrane. Its function is as follows. Part of the outer membrane protein assembly complex (Bam), which is involved in assembly and insertion of beta-barrel proteins into the outer membrane. Nonessential member of the complex that stabilizes the interaction between the essential proteins BamA and BamD. Efficient substrate folding and insertion into the outer membrane requires all 5 subunits. A lateral gate may open between the first and last strands of the BamA beta-barrel that allows substrate to insert into the outer membrane; comparison of the structures of complete and nearly complete Bam complexes show there is considerable movement of all 5 proteins. The polypeptide is Outer membrane protein assembly factor BamC (Escherichia coli (strain K12)).